A 423-amino-acid chain; its full sequence is 3-phosphoshikimate 1-carboxyvinyltransferase (423 aa).

Residues K19, S20, and R24 each coordinate 3-phosphoshikimate. Position 19 (K19) interacts with phosphoenolpyruvate. The phosphoenolpyruvate site is built by G89 and R118. 3-phosphoshikimate is bound by residues S164, S165, Q166, S192, D304, and K331. Q166 serves as a coordination point for phosphoenolpyruvate. The Proton acceptor role is filled by D304. Phosphoenolpyruvate contacts are provided by R335 and R377.

The protein belongs to the EPSP synthase family. Monomer.

The protein localises to the cytoplasm. It catalyses the reaction 3-phosphoshikimate + phosphoenolpyruvate = 5-O-(1-carboxyvinyl)-3-phosphoshikimate + phosphate. It participates in metabolic intermediate biosynthesis; chorismate biosynthesis. Its function is as follows. Catalyzes the transfer of the enolpyruvyl moiety of phosphoenolpyruvate (PEP) to the 5-hydroxyl of shikimate-3-phosphate (S3P) to produce enolpyruvyl shikimate-3-phosphate and inorganic phosphate. The sequence is that of 3-phosphoshikimate 1-carboxyvinyltransferase from Korarchaeum cryptofilum (strain OPF8).